A 67-amino-acid chain; its full sequence is Large ribosomal subunit protein bL32 (67 aa).

Basic residues predominate over residues 1-19 (MAVPKRKMSRSNTRARRSQ). A disordered region spans residues 1–21 (MAVPKRKMSRSNTRARRSQWK).

Belongs to the bacterial ribosomal protein bL32 family.

In Clavibacter sepedonicus (Clavibacter michiganensis subsp. sepedonicus), this protein is Large ribosomal subunit protein bL32.